Consider the following 303-residue polypeptide: Ornithine carbamoyltransferase (303 aa).

Residues 52–55 (STRT), Gln79, Arg103, and 130–133 (HPCQ) each bind carbamoyl phosphate. L-ornithine-binding positions include Asn161, Asp221, and 225 to 226 (SM). Residues 260–261 (CL) and Arg288 contribute to the carbamoyl phosphate site.

The protein belongs to the aspartate/ornithine carbamoyltransferase superfamily. OTCase family.

It localises to the cytoplasm. It carries out the reaction carbamoyl phosphate + L-ornithine = L-citrulline + phosphate + H(+). The protein operates within amino-acid biosynthesis; L-arginine biosynthesis; L-arginine from L-ornithine and carbamoyl phosphate: step 1/3. Reversibly catalyzes the transfer of the carbamoyl group from carbamoyl phosphate (CP) to the N(epsilon) atom of ornithine (ORN) to produce L-citrulline. The protein is Ornithine carbamoyltransferase (argF) of Rhizobium meliloti (strain 1021) (Ensifer meliloti).